The primary structure comprises 268 residues: Formamidopyrimidine-DNA glycosylase (268 aa).

The active-site Schiff-base intermediate with DNA is the proline 2. Glutamate 3 serves as the catalytic Proton donor. Catalysis depends on lysine 56, which acts as the Proton donor; for beta-elimination activity. 3 residues coordinate DNA: histidine 91, arginine 110, and arginine 149. The segment at glutamine 234–glutamine 268 adopts an FPG-type zinc-finger fold. The active-site Proton donor; for delta-elimination activity is the arginine 258.

This sequence belongs to the FPG family. Monomer. Requires Zn(2+) as cofactor.

The enzyme catalyses Hydrolysis of DNA containing ring-opened 7-methylguanine residues, releasing 2,6-diamino-4-hydroxy-5-(N-methyl)formamidopyrimidine.. The catalysed reaction is 2'-deoxyribonucleotide-(2'-deoxyribose 5'-phosphate)-2'-deoxyribonucleotide-DNA = a 3'-end 2'-deoxyribonucleotide-(2,3-dehydro-2,3-deoxyribose 5'-phosphate)-DNA + a 5'-end 5'-phospho-2'-deoxyribonucleoside-DNA + H(+). Involved in base excision repair of DNA damaged by oxidation or by mutagenic agents. Acts as a DNA glycosylase that recognizes and removes damaged bases. Has a preference for oxidized purines, such as 7,8-dihydro-8-oxoguanine (8-oxoG). Has AP (apurinic/apyrimidinic) lyase activity and introduces nicks in the DNA strand. Cleaves the DNA backbone by beta-delta elimination to generate a single-strand break at the site of the removed base with both 3'- and 5'-phosphates. This chain is Formamidopyrimidine-DNA glycosylase, found in Syntrophomonas wolfei subsp. wolfei (strain DSM 2245B / Goettingen).